Here is a 204-residue protein sequence, read N- to C-terminus: MNLVGSYAHHHHHHHHHHHPHPAHPMLHEPFLFGPASRCHQERPYFQSWLLSPADAAPDFPAGGPPPTTAVRAAAASYGPDARPGQSPGRLEALGGRLGRRKGSGPKKERRRTESINSAFAELRECIPNVPADTKLSKIKTLRLATSYIAYLMDVLAKDAQAGDPEAFKAELKKADGGRESKRKRELQQHEGFPPALGPGEKRD.

3 disordered regions span residues 1–24, 57–115, and 172–204; these read MNLVGSYAHHHHHHHHHHHPHPAH, APDF…RTES, and LKKADGGRESKRKRELQQHEGFPPALGPGEKRD. Basic residues-rich tracts occupy residues 8–22 and 98–110; these read AHHHHHHHHHHHPHP and LGRRKGSGPKKER. Positions 100–152 constitute a bHLH domain; sequence RRKGSGPKKERRRTESINSAFAELRECIPNVPADTKLSKIKTLRLATSYIAYL. Residue threonine 113 is modified to Phosphothreonine; by PLK4. At serine 115 the chain carries Phosphoserine; by PLK4.

In terms of assembly, efficient DNA binding requires dimerization with another bHLH protein. Forms homodimers and heterodimers with TCF3 gene products E12 and E47, HAND2 and HEY1, HEY2 and HEYL (hairy-related transcription factors). Interacts with MDFIC. Interacts with SOX15; the interaction enhances HAND1-induced differentiation of trophoblast giant cells. Post-translationally, phosphorylation by PLK4 disrupts the interaction with MDFIC and leads to translocation into the nucleoplasm, allowing dimerization and transcription factor activity.

The protein resides in the nucleus. The protein localises to the nucleoplasm. It is found in the nucleolus. Functionally, transcription factor that plays an essential role in both trophoblast giant cell differentiation and in cardiac morphogenesis. Binds the DNA sequence 5'-NRTCTG-3' (non-canonical E-box). Acts as a transcriptional repressor of SOX15. In the adult, could be required for ongoing expression of cardiac-specific genes. The sequence is that of Heart- and neural crest derivatives-expressed protein 1 (HAND1) from Ovis aries (Sheep).